Reading from the N-terminus, the 432-residue chain is MGNNVVVLGTQWGDEGKGKIVDLLTERAKYVVRYQGGHNAGHTLVINGEKTVLHLIPSGILRENVTSIIGNGVVLSPAALMKEMKGLEDRGIPVRERLLLSEACPLILDYHVALDVAREKARGAKAIGTTGRGIGPAYEDKVARRGLRVGDLFDKATFADKLKEVMEYHNFQLVNFYKAEAVDYQKVLDDVMAIADILTSMVVDVSDLLDQARQRGDFVMFEGAQGTLLDIDHGTYPYVTSSNTTAGGVATGSGLGPRYVDYVLGIIKAYSTRVGAGPFPTELFDETGEFLCKQGNEFGATTGRRRRTGWLDAVAVRRAVQINSLSGFCLTKLDVLDGLKEVKICVGYRMPDGREVTTTPLAADNWEGIEPIYETMPGWSETTFGVKERSGLPQAALNYIQRIEELTGVPVDIISTGPDRTETMILRDPFDA.

GTP contacts are provided by residues 13-19 (GDEGKGK) and 41-43 (GHT). Residue D14 is the Proton acceptor of the active site. Residues D14 and G41 each contribute to the Mg(2+) site. IMP contacts are provided by residues 14 to 17 (DEGK), 39 to 42 (NAGH), T130, R144, Q225, T240, and R304. The Proton donor role is filled by H42. Residue 300 to 306 (ATTGRRR) participates in substrate binding. GTP is bound by residues R306, 332–334 (KLD), and 415–417 (STG).

The protein belongs to the adenylosuccinate synthetase family. In terms of assembly, homodimer. It depends on Mg(2+) as a cofactor.

It localises to the cytoplasm. It carries out the reaction IMP + L-aspartate + GTP = N(6)-(1,2-dicarboxyethyl)-AMP + GDP + phosphate + 2 H(+). The protein operates within purine metabolism; AMP biosynthesis via de novo pathway; AMP from IMP: step 1/2. In terms of biological role, plays an important role in the de novo pathway of purine nucleotide biosynthesis. Catalyzes the first committed step in the biosynthesis of AMP from IMP. In Klebsiella pneumoniae subsp. pneumoniae (strain ATCC 700721 / MGH 78578), this protein is Adenylosuccinate synthetase.